Consider the following 257-residue polypeptide: MSVPLILTILAGAATFIGAFLGVLGQKPSNRLLAFSLGFAAGIMLLISLMEMLPAALAAEGMSPVLGYGMFIFGLLGYFGLDRMLPHAHPQDLMQKSVQPLPKSLKRTAILLTLGISLHNFPEGIATFVTASSNLELGFGIALAVALHNIPEGLAVAGPVYAATGSKRTAILWAGISGLAEILGGVLAWLILGSMISPVVMAAIMAAVAGIMVALSVDELMPLAKEIDPNNNPSYGVLCGMSVMGFSLVLLQTAGIG.

Transmembrane regions (helical) follow at residues 5 to 25 (LILTILAGAATFIGAFLGVLG), 32 to 52 (LLAFSLGFAAGIMLLISLMEM), and 61 to 81 (GMSPVLGYGMFIFGLLGYFGL). Fe(2+)-binding residues include Asn120 and Glu123. Residues Glu123 and His148 each contribute to the Zn(2+) site. The next 4 membrane-spanning stretches (helical) occupy residues 137-157 (LGFGIALAVALHNIPEGLAVA), 171-191 (ILWAGISGLAEILGGVLAWLI), 195-215 (MISPVVMAAIMAAVAGIMVAL), and 236-256 (GVLCGMSVMGFSLVLLQTAGI). Fe(2+) is bound by residues Asn149, Glu152, and Glu181. Glu152 is a Zn(2+) binding site.

Belongs to the ZIP transporter (TC 2.A.5) family. ZupT subfamily.

It localises to the cell inner membrane. The catalysed reaction is Zn(2+)(in) = Zn(2+)(out). Mediates zinc uptake. May also transport other divalent cations. The polypeptide is Zinc transporter ZupT (Escherichia coli O127:H6 (strain E2348/69 / EPEC)).